The sequence spans 300 residues: FeMo cofactor biosynthesis protein NifB (300 aa).

In terms of domain architecture, Radical SAM core spans 24–266 (HDKVGRVHLP…PQFRACGQCR (243 aa)). The [4Fe-4S] cluster site is built by C38, C42, and C45. The S-adenosyl-L-methionine site is built by G93, T144, and I196. Residues C262 and C265 each contribute to the [4Fe-4S] cluster site.

This sequence belongs to the radical SAM superfamily. NifB family. As to quaternary structure, monomer. The cofactor is [4Fe-4S] cluster.

The protein operates within cofactor biosynthesis; Fe-Mo cofactor biosynthesis. Functionally, involved in the biosynthesis of the iron-molybdenum cofactor (FeMo-co or M-cluster) found in the dinitrogenase enzyme of the nitrogenase complex in nitrogen-fixing microorganisms. NifB catalyzes the crucial step of radical SAM-dependent carbide insertion that occurs concomitant with the insertion of a 9th sulfur and the rearrangement/coupling of two [4Fe-4S] clusters into a [8Fe-9S-C] cluster, the precursor to the M-cluster. The sequence is that of FeMo cofactor biosynthesis protein NifB from Methanocaldococcus jannaschii (strain ATCC 43067 / DSM 2661 / JAL-1 / JCM 10045 / NBRC 100440) (Methanococcus jannaschii).